The following is a 69-amino-acid chain: DNA gyrase inhibitor YacG (69 aa).

4 residues coordinate Zn(2+): cysteine 13, cysteine 16, cysteine 32, and cysteine 36.

It belongs to the DNA gyrase inhibitor YacG family. Interacts with GyrB. The cofactor is Zn(2+).

Inhibits all the catalytic activities of DNA gyrase by preventing its interaction with DNA. Acts by binding directly to the C-terminal domain of GyrB, which probably disrupts DNA binding by the gyrase. The sequence is that of DNA gyrase inhibitor YacG from Neisseria gonorrhoeae (strain ATCC 700825 / FA 1090).